Here is a 74-residue protein sequence, read N- to C-terminus: Protein Vpu (74 aa).

Residues 1–4 are Extracellular-facing; it reads MLWL. The helical transmembrane segment at 5-25 threads the bilayer; sequence GFIALGVAIIIAAIIWVLLYK. Over 26–74 the chain is Cytoplasmic; sequence EYKKIKLQEKIEQIRQKIRDRTEDRGKESDGDAEWLAILLSPDKLDNWV. Residue S54 is modified to Phosphoserine; by host CK2.

This sequence belongs to the HIV-1 VPU protein family. Homopentamer. Interacts with host CD4 and BRTC; these interactions induce proteasomal degradation of CD4. Interacts with host BST2; this interaction leads to the degradation of host BST2. Interacts with host FBXW11. Interacts with host AP1M1; this interaction plays a role in the mistrafficking and subsequent degradation of host BST2. Interacts with host RANBP2; this interaction allows Vpu to down-regulate host BLM sumoylation. Phosphorylated by host CK2. This phosphorylation is necessary for interaction with human BTRC and degradation of CD4.

The protein resides in the host membrane. With respect to regulation, ion channel activity is inhibited by hexamethylene amiloride in vitro. Its function is as follows. Enhances virion budding by targeting host CD4 and Tetherin/BST2 to proteasome degradation. Degradation of CD4 prevents any unwanted premature interactions between viral Env and its host receptor CD4 in the endoplasmic reticulum. Degradation of antiretroviral protein Tetherin/BST2 is important for virion budding, as BST2 tethers new viral particles to the host cell membrane. Mechanistically, Vpu bridges either CD4 or BST2 to BTRC, a substrate recognition subunit of the Skp1/Cullin/F-box protein E3 ubiquitin ligase, induces their ubiquitination and subsequent proteasomal degradation. The alteration of the E3 ligase specificity by Vpu seems to promote the degradation of host IKBKB, leading to NF-kappa-B down-regulation and subsequent apoptosis. Acts as a viroporin that forms an oligomeric ion channel in membranes. Modulates the host DNA repair mechanisms to promote degradation of nuclear viral cDNA in cells that are already productively infected in order to suppress immune sensing and proviral hyper-integration (superinfection). Manipulates PML-NBs and modulates SUMOylation of host BLM protein thereby enhancing its DNA-end processing activity toward viral unintegrated linear DNA. Also inhibits RAD52-mediated homologous repair of viral cDNA, preventing the generation of dead-end circular forms of single copies of the long terminal repeat and permitting sustained nucleolytic attack. The chain is Protein Vpu from Human immunodeficiency virus type 1 group N (isolate YBF106) (HIV-1).